We begin with the raw amino-acid sequence, 375 residues long: Growth/differentiation factor 8 (375 aa).

A signal peptide spans 1–23 (MQKLQLCVYIYLFMLIVAGPVDL). Positions 24–266 (NENSEQKENV…VTDTPKRSRR (243 aa)) are excised as a propeptide. Asparagine 71 is a glycosylation site (N-linked (GlcNAc...) asparagine). 4 disulfides stabilise this stretch: cysteine 272–cysteine 282, cysteine 281–cysteine 340, cysteine 309–cysteine 372, and cysteine 313–cysteine 374.

It belongs to the TGF-beta family. As to quaternary structure, homodimer; disulfide-linked. Interacts with WFIKKN2, leading to inhibit its activity. Interacts with FSTL3. Synthesized as large precursor molecule that undergoes proteolytic cleavage to generate an N-terminal propeptide and a disulfide linked C-terminal dimer, which is the biologically active molecule. The circulating form consists of a latent complex of the C-terminal dimer and other proteins, including its propeptide, which maintain the C-terminal dimer in a latent, inactive state. Ligand activation requires additional cleavage of the prodomain by a tolloid-like metalloproteinase.

The protein localises to the secreted. Acts specifically as a negative regulator of skeletal muscle growth. In Papio hamadryas (Hamadryas baboon), this protein is Growth/differentiation factor 8 (MSTN).